We begin with the raw amino-acid sequence, 235 residues long: Small ribosomal subunit protein uS3 (235 aa).

A KH type-2 domain is found at 39 to 107 (IRQYVFKALP…DVSLNIVEIR (69 aa)).

Belongs to the universal ribosomal protein uS3 family. As to quaternary structure, part of the 30S ribosomal subunit. Forms a tight complex with proteins S10 and S14.

In terms of biological role, binds the lower part of the 30S subunit head. Binds mRNA in the 70S ribosome, positioning it for translation. This chain is Small ribosomal subunit protein uS3, found in Sphingopyxis alaskensis (strain DSM 13593 / LMG 18877 / RB2256) (Sphingomonas alaskensis).